Here is an 80-residue protein sequence, read N- to C-terminus: Cell division protein ZapB (80 aa).

Residues 3–80 are a coiled coil; it reads LEILEQLEAK…GLLGKMDEVE (78 aa). The segment at 41–60 is disordered; sequence LEQANNGRSEVEQEAQRARD. Residues 49–60 are compositionally biased toward basic and acidic residues; that stretch reads SEVEQEAQRARD.

This sequence belongs to the ZapB family. As to quaternary structure, homodimer. The ends of the coiled-coil dimer bind to each other, forming polymers. Interacts with FtsZ.

It is found in the cytoplasm. Functionally, non-essential, abundant cell division factor that is required for proper Z-ring formation. It is recruited early to the divisome by direct interaction with FtsZ, stimulating Z-ring assembly and thereby promoting cell division earlier in the cell cycle. Its recruitment to the Z-ring requires functional FtsA or ZipA. In Aliivibrio fischeri (strain ATCC 700601 / ES114) (Vibrio fischeri), this protein is Cell division protein ZapB.